A 431-amino-acid chain; its full sequence is Peroxisomal biogenesis factor 3 (431 aa).

Residues 1–10 (MDFFRRHQKK) lie on the Peroxisomal side of the membrane. A helical transmembrane segment spans residues 11-28 (VLALVGVALSSYLFIDYV). Topologically, residues 29 to 431 (KKKFFEIQGR…VVYSSFDWAL (403 aa)) are cytoplasmic. The tract at residues 95 to 126 (TDRVLALESSTSSSATAQTVPTMTSGATEEGE) is disordered. Residues 112–121 (QTVPTMTSGA) are compositionally biased toward polar residues.

It belongs to the peroxin-3 family.

Its subcellular location is the peroxisome membrane. In terms of biological role, involved in peroxisome biosynthesis. Seems to directly or indirectly sequesters components of the peroxisome biogenesis machinery. In Yarrowia lipolytica (strain CLIB 122 / E 150) (Yeast), this protein is Peroxisomal biogenesis factor 3 (PEX3).